Here is a 154-residue protein sequence, read N- to C-terminus: Endoribonuclease YbeY (154 aa).

His113, His117, and His123 together coordinate Zn(2+).

The protein belongs to the endoribonuclease YbeY family. Zn(2+) is required as a cofactor.

It is found in the cytoplasm. In terms of biological role, single strand-specific metallo-endoribonuclease involved in late-stage 70S ribosome quality control and in maturation of the 3' terminus of the 16S rRNA. This is Endoribonuclease YbeY from Vibrio cholerae serotype O1 (strain ATCC 39541 / Classical Ogawa 395 / O395).